The chain runs to 389 residues: S-adenosylmethionine synthase (389 aa).

His-17 provides a ligand contact to ATP. Asp-19 lines the Mg(2+) pocket. Glu-45 contacts K(+). 2 residues coordinate L-methionine: Glu-58 and Gln-101. Residues Gln-101–Glu-111 are flexible loop. ATP is bound by residues Asp-168–Lys-170, Arg-234–Phe-235, Asp-243, Arg-249–Lys-250, Ala-266, and Lys-270. Asp-243 provides a ligand contact to L-methionine. Position 274 (Lys-274) interacts with L-methionine.

It belongs to the AdoMet synthase family. Homotetramer; dimer of dimers. Mg(2+) is required as a cofactor. K(+) serves as cofactor.

The protein resides in the cytoplasm. The enzyme catalyses L-methionine + ATP + H2O = S-adenosyl-L-methionine + phosphate + diphosphate. Its pathway is amino-acid biosynthesis; S-adenosyl-L-methionine biosynthesis; S-adenosyl-L-methionine from L-methionine: step 1/1. Its function is as follows. Catalyzes the formation of S-adenosylmethionine (AdoMet) from methionine and ATP. The overall synthetic reaction is composed of two sequential steps, AdoMet formation and the subsequent tripolyphosphate hydrolysis which occurs prior to release of AdoMet from the enzyme. In Syntrophotalea carbinolica (strain DSM 2380 / NBRC 103641 / GraBd1) (Pelobacter carbinolicus), this protein is S-adenosylmethionine synthase.